The chain runs to 66 residues: Large ribosomal subunit protein bL33 (66 aa).

This sequence belongs to the bacterial ribosomal protein bL33 family.

This is Large ribosomal subunit protein bL33 from Synechococcus sp. (strain CC9902).